Consider the following 255-residue polypeptide: Small ribosomal subunit protein uS2 (255 aa).

The segment at 231-255 (RLQTGAEEEFSTEGEEVVEETPAEA) is disordered. A compositionally biased stretch (acidic residues) spans 236-255 (AEEEFSTEGEEVVEETPAEA).

Belongs to the universal ribosomal protein uS2 family.

The polypeptide is Small ribosomal subunit protein uS2 (Citrifermentans bemidjiense (strain ATCC BAA-1014 / DSM 16622 / JCM 12645 / Bem) (Geobacter bemidjiensis)).